The following is a 480-amino-acid chain: Probable pectin lyase F-2 (480 aa).

Positions 1 to 25 (MTLIRTVLMAAALLGASAHAQGVVG) are cleaved as a signal peptide. An intrachain disulfide couples Cys-83 to Cys-106. The N-linked (GlcNAc...) asparagine glycan is linked to Asn-111. The active site involves Arg-256. A disulfide bond links Cys-322 and Cys-330. Residues 386-401 (SSSAIPSSTPAPSSSA) show a composition bias toward low complexity. Residues 386–436 (SSSAIPSSTPAPSSSALAKRHGGHDRHGLGHIPHLTEGGPGAWHTPGPAPS) form a disordered region.

The protein belongs to the polysaccharide lyase 1 family.

It localises to the secreted. The enzyme catalyses Eliminative cleavage of (1-&gt;4)-alpha-D-galacturonan methyl ester to give oligosaccharides with 4-deoxy-6-O-methyl-alpha-D-galact-4-enuronosyl groups at their non-reducing ends.. Its function is as follows. Pectinolytic enzymes consist of four classes of enzymes: pectin lyase, polygalacturonase, pectin methylesterase and rhamnogalacturonase. Among pectinolytic enzymes, pectin lyase is the most important in depolymerization of pectin, since it cleaves internal glycosidic bonds of highly methylated pectins. This Aspergillus terreus (strain NIH 2624 / FGSC A1156) protein is Probable pectin lyase F-2 (pelF-2).